Consider the following 284-residue polypeptide: MPAQLLDGNALSKKLRTEIAARSAIVTAKGTRPGLAVIVVGDNPASQVYVRNKVKACEDVGFHSVLERYTAELGEEELLARIATLNADPAIHGILVQLPLPEHIASERVLEAIAPEKDVDGFHVANAGALMVGQSEFKPCTPYGCMKILESIEYPIRSARAVIVGASNIVGKPMAMLLLQAGATVTICNSKTRDLAHHTKDADILVVATGKPKMISGDMVKNGAVVIDVGINRLPDGKLCGDVDFDTAKYVAGWITPVPGGVGPMTITMLLMNTLEAAEKAAKH.

Residues 165–167, serine 190, and isoleucine 231 each bind NADP(+); that span reads GAS.

This sequence belongs to the tetrahydrofolate dehydrogenase/cyclohydrolase family. As to quaternary structure, homodimer.

The enzyme catalyses (6R)-5,10-methylene-5,6,7,8-tetrahydrofolate + NADP(+) = (6R)-5,10-methenyltetrahydrofolate + NADPH. The catalysed reaction is (6R)-5,10-methenyltetrahydrofolate + H2O = (6R)-10-formyltetrahydrofolate + H(+). It participates in one-carbon metabolism; tetrahydrofolate interconversion. Catalyzes the oxidation of 5,10-methylenetetrahydrofolate to 5,10-methenyltetrahydrofolate and then the hydrolysis of 5,10-methenyltetrahydrofolate to 10-formyltetrahydrofolate. The polypeptide is Bifunctional protein FolD (Polynucleobacter necessarius subsp. necessarius (strain STIR1)).